A 126-amino-acid polypeptide reads, in one-letter code: Glycine cleavage system H protein (126 aa).

A Lipoyl-binding domain is found at 24 to 105 (TLTVGITDHA…AYGVWLFKLK (82 aa)). Lysine 65 carries the post-translational modification N6-lipoyllysine.

The protein belongs to the GcvH family. The glycine cleavage system is composed of four proteins: P, T, L and H. It depends on (R)-lipoate as a cofactor.

Functionally, the glycine cleavage system catalyzes the degradation of glycine. The H protein shuttles the methylamine group of glycine from the P protein to the T protein. In Burkholderia vietnamiensis (strain G4 / LMG 22486) (Burkholderia cepacia (strain R1808)), this protein is Glycine cleavage system H protein.